Here is a 209-residue protein sequence, read N- to C-terminus: Cyclin-dependent kinase inhibitor 2 (209 aa).

The required for nuclear localization stretch occupies residues 1-32; the sequence is MAAVRRRERDVVEENGVTTTTVKRRKMEEEVD.

This sequence belongs to the CDI family. ICK/KRP subfamily. In terms of assembly, specifically interacts with CDKA-1, but not with CDKB1-1. Post-translationally, phosphorylated.

Its subcellular location is the nucleus. The protein resides in the nucleoplasm. Its function is as follows. Binds and inhibits CYCD2-1/CDKA-1 complex kinase activity. Regulates cell division which is crucial for plant growth, development and morphogenesis. May regulate early lateral root initiation by blocking the G1/S phase transition. Controls the mitosis-to-endocycle transition and the onset of the endoreduplication cycle during leaf development through inhibition of mitotic CDKA-1 kinase complexes. Specifically targets CDKA-1. In Arabidopsis thaliana (Mouse-ear cress), this protein is Cyclin-dependent kinase inhibitor 2 (KRP2).